A 343-amino-acid polypeptide reads, in one-letter code: Nod factor export ATP-binding protein I (343 aa).

Polar residues predominate over residues 1-14 (MQLLTRANVSSSPS). The tract at residues 1–38 (MQLLTRANVSSSPSRRPESNALKQKCHGHSNADNSLSR) is disordered. Positions 45-275 (IELTNVSKSY…QIGCDVIEIY (231 aa)) constitute an ABC transporter domain. Position 77–84 (77–84 (GPNGAGKS)) interacts with ATP.

It belongs to the ABC transporter superfamily. Lipooligosaccharide exporter (TC 3.A.1.102) family. As to quaternary structure, the complex is composed of two ATP-binding proteins (NodI) and two transmembrane proteins (NodJ).

It localises to the cell inner membrane. In terms of biological role, part of the ABC transporter complex NodIJ involved in the export of the nodulation factors (Nod factors), the bacterial signal molecules that induce symbiosis and subsequent nodulation induction. Nod factors are LCO (lipo-chitin oligosaccharide), a modified beta-1,4-linked N-acetylglucosamine oligosaccharide. This subunit is responsible for energy coupling to the transport system. This is Nod factor export ATP-binding protein I from Sinorhizobium fredii (strain NBRC 101917 / NGR234).